Here is a 1192-residue protein sequence, read N- to C-terminus: MPAPEQASLVEEGQPQTRQEAASTGPGMEPETTATTILASVKEQELQFQRLTRELEVERQIVASQLERCRLGAESPSIASTSSTEKSFPWRSTDVPNTGVSKPRVSDAVQPNNYLIRTEPEQGTLYSPEQTSLHESEGSLGNSRSSTQMNSYSDSGYQEAGSFHNSQNVSKADNRQQHSFIGSTNNHVVRNSRAEGQTLVQPSVANRAMRRVSSVPSRAQSPSYVISTGVSPSRGSLRTSLGSGFGSPSVTDPRPLNPSAYSSTTLPAARAASPYSQRPASPTAIRRIGSVTSRQTSNPNGPTPQYQTTARVGSPLTLTDAQTRVASPSQGQVGSSSPKRSGMTAVPQHLGPSLQRTVHDMEQFGQQQYDIYERMVPPRPDSLTGLRSSYASQHSQLGQDLRSAVSPDLHITPIYEGRTYYSPVYRSPNHGTVELQGSQTALYRTGSVGIGNLQRTSSQRSTLTYQRNNYALNTTATYAEPYRPIQYRVQECNYNRLQHAVPADDGTTRSPSIDSIQKDPREFAWRDPELPEVIHMLQHQFPSVQANAAAYLQHLCFGDNKVKMEVCRLGGIKHLVDLLDHRVLEVQKNACGALRNLVFGKSTDENKIAMKNVGGIPALLRLLRKSIDAEVRELVTGVLWNLSSCDAVKMTIIRDALSTLTNTVIVPHSGWNNSSFDDDHKIKFQTSLVLRNTTGCLRNLSSAGEEARKQMRSCEGLVDSLLYVIHTCVNTSDYDSKTVENCVCTLRNLSYRLELEVPQARLLGLNELDDLLGKESPSKDSEPSCWGKKKKKKKRTPQEDQWDGVGPIPGLSKSPKGVEMLWHPSVVKPYLTLLAESSNPATLEGSAGSLQNLSAGNWKFAAYIRAAVRKEKGLPILVELLRMDNDRVVSSVATALRNMALDVRNKELIGKYAMRDLVNRLPGGNGPSVLSDETMAAICCALHEVTSKNMENAKALADSGGIEKLVNITKGRGDRSSLKVVKAAAQVLNTLWQYRDLRSIYKKDGWNQNHFITPVSTLERDRFKSHPSLSTTNQQMSPIIQSVGSTSSSPALLGIRDPRSEYDRTQPPMQYYNSQGDATHKGLYPGSSKPSPIYISSYSSPAREQNRRLQHQQLYYSQDDSNRKNFDAYRLYLQSPHSYEDPYFDDRVHFPASTDYSTQYGLKSTTNYVDFYSTKRPSYRAEQYPGSPDSWV.

Positions 1-31 (MPAPEQASLVEEGQPQTRQEAASTGPGMEPE) are disordered. Residues 36–70 (TILASVKEQELQFQRLTRELEVERQIVASQLERCR) are a coiled coil. The interval 73 to 262 (AESPSIASTS…PRPLNPSAYS (190 aa)) is disordered. The residue at position 75 (Ser75) is a Phosphoserine. Residues 77 to 86 (SIASTSSTEK) show a composition bias toward polar residues. Thr84 is subject to Phosphothreonine. Ser106, Ser132, Ser136, and Ser139 each carry phosphoserine. Composition is skewed to polar residues over residues 138–156 (GSLG…SDSG), 163–204 (FHNS…QPSV), and 214–230 (SVPS…STGV). Ser221, Ser231, and Ser236 each carry phosphoserine. Low complexity predominate over residues 231 to 242 (SPSRGSLRTSLG). Arg254 and Arg270 each carry omega-N-methylarginine. Ser273 and Ser281 each carry phosphoserine. Residues 290–310 (SVTSRQTSNPNGPTPQYQTTA) are disordered. Phosphoserine occurs at positions 314, 327, and 337. The interval 323–348 (TRVASPSQGQVGSSSPKRSGMTAVPQ) is disordered. Residues 325 to 338 (VASPSQGQVGSSSP) are compositionally biased toward low complexity. Position 372 is a phosphotyrosine (Tyr372). Phosphoserine is present on residues Ser392, Ser403, and Ser406. Thr412 carries the post-translational modification Phosphothreonine. Tyr415 is subject to Phosphotyrosine. The ARM 1 repeat unit spans residues 415-455 (YEGRTYYSPVYRSPNHGTVELQGSQTALYRTGSVGIGNLQR). Phosphoserine occurs at positions 422, 427, and 438. The residue at position 478 (Tyr478) is a Phosphotyrosine. A phosphoserine mark is found at Ser510, Ser512, and Ser515. ARM repeat units lie at residues 518 to 557 (KDPR…HLCF), 560 to 599 (NKVK…NLVF), 604 to 644 (DENK…NLSS), 660 to 702 (LTNT…NLSS), and 706 to 751 (EARK…NLSY). Residues 773 to 782 (GKESPSKDSE) are compositionally biased toward basic and acidic residues. The interval 773 to 810 (GKESPSKDSEPSCWGKKKKKKKRTPQEDQWDGVGPIPG) is disordered. Ser776 is subject to Phosphoserine. ARM repeat units follow at residues 815-855 (PKGV…NLSA), 862-901 (AYIR…NMAL), and 950-993 (MENA…TLWQ). Thr1013 and Thr1017 each carry phosphothreonine. Ser1045 is subject to Phosphoserine. Positions 1058 to 1086 (PRSEYDRTQPPMQYYNSQGDATHKGLYPG) are disordered. Polar residues predominate over residues 1067 to 1077 (PPMQYYNSQGD). Phosphoserine occurs at positions 1091, 1100, and 1135.

It belongs to the beta-catenin family. As to quaternary structure, interacts with PDZD2. Interacts (via the C-terminus) with FRMPD2 (via the PDZ 2 domain). Interacts with RHOA; the interaction is detected at the midbody. Interacts with ECT2; the interaction is detected at the midbody. Interacts with CCDC85B. Expressed in salivary glands (at protein level). Expressed in arrector pili muscle (at protein level).

Its subcellular location is the cell junction. The protein localises to the desmosome. The protein resides in the cytoplasm. It localises to the cytoskeleton. It is found in the spindle. Its subcellular location is the midbody. The protein localises to the cell membrane. Functionally, plays a role as a regulator of Rho activity during cytokinesis. May play a role in junctional plaques. This chain is Plakophilin-4 (PKP4), found in Homo sapiens (Human).